Here is a 72-residue protein sequence, read N- to C-terminus: MAKADVIEVEGKVTETLPNAMFKVELENGAEILAHVSGKIRMHYIKILPGDRVKVEMSPYDLTKGRITFRFK.

The S1-like domain maps to 1–72; it reads MAKADVIEVE…TKGRITFRFK (72 aa).

Belongs to the IF-1 family. As to quaternary structure, component of the 30S ribosomal translation pre-initiation complex which assembles on the 30S ribosome in the order IF-2 and IF-3, IF-1 and N-formylmethionyl-tRNA(fMet); mRNA recruitment can occur at any time during PIC assembly.

The protein localises to the cytoplasm. In terms of biological role, one of the essential components for the initiation of protein synthesis. Stabilizes the binding of IF-2 and IF-3 on the 30S subunit to which N-formylmethionyl-tRNA(fMet) subsequently binds. Helps modulate mRNA selection, yielding the 30S pre-initiation complex (PIC). Upon addition of the 50S ribosomal subunit IF-1, IF-2 and IF-3 are released leaving the mature 70S translation initiation complex. The chain is Translation initiation factor IF-1 from Limosilactobacillus reuteri (strain DSM 20016) (Lactobacillus reuteri).